We begin with the raw amino-acid sequence, 187 residues long: Putative AgrB-like protein 1 (187 aa).

The next 5 membrane-spanning stretches (helical) occupy residues 29 to 49 (VVIV…IAGI), 50 to 70 (LGYF…KPFI), 81 to 98 (CFIA…LVTF), 103 to 120 (LFSI…IYNK), and 149 to 169 (ILFL…TITW).

Belongs to the AgrB family.

It localises to the cell membrane. Its function is as follows. May be involved in the proteolytic processing of a quorum sensing system signal molecule precursor. This chain is Putative AgrB-like protein 1, found in Clostridium perfringens (strain 13 / Type A).